The chain runs to 620 residues: Chaperone protein HscA homolog (620 aa).

The protein belongs to the heat shock protein 70 family.

Its function is as follows. Chaperone involved in the maturation of iron-sulfur cluster-containing proteins. Has a low intrinsic ATPase activity which is markedly stimulated by HscB. The chain is Chaperone protein HscA homolog from Pseudomonas syringae pv. tomato (strain ATCC BAA-871 / DC3000).